The following is a 450-amino-acid chain: tRNA modification GTPase MnmE (450 aa).

Positions 25, 86, and 126 each coordinate (6S)-5-formyl-5,6,7,8-tetrahydrofolate. A TrmE-type G domain is found at 221 to 373 (GLRVALVGRP…LVQALLERCG (153 aa)). Asparagine 231 provides a ligand contact to K(+). GTP-binding positions include 231 to 236 (NVGKSS), 250 to 256 (TELPGTT), 275 to 278 (DTAG), and 336 to 339 (NKAD). Position 235 (serine 235) interacts with Mg(2+). Residues threonine 250, leucine 252, and threonine 255 each contribute to the K(+) site. Threonine 256 provides a ligand contact to Mg(2+). Residue lysine 450 participates in (6S)-5-formyl-5,6,7,8-tetrahydrofolate binding.

The protein belongs to the TRAFAC class TrmE-Era-EngA-EngB-Septin-like GTPase superfamily. TrmE GTPase family. Homodimer. Heterotetramer of two MnmE and two MnmG subunits. Requires K(+) as cofactor.

It localises to the cytoplasm. Its function is as follows. Exhibits a very high intrinsic GTPase hydrolysis rate. Involved in the addition of a carboxymethylaminomethyl (cmnm) group at the wobble position (U34) of certain tRNAs, forming tRNA-cmnm(5)s(2)U34. This chain is tRNA modification GTPase MnmE, found in Parasynechococcus marenigrum (strain WH8102).